We begin with the raw amino-acid sequence, 361 residues long: Mannose-1-phosphate guanyltransferase (361 aa).

Belongs to the transferase hexapeptide repeat family.

Its subcellular location is the cytoplasm. The catalysed reaction is alpha-D-mannose 1-phosphate + GTP + H(+) = GDP-alpha-D-mannose + diphosphate. It functions in the pathway nucleotide-sugar biosynthesis; GDP-alpha-D-mannose biosynthesis; GDP-alpha-D-mannose from alpha-D-mannose 1-phosphate (GTP route): step 1/1. Involved in cell wall synthesis where it is required for glycosylation. Involved in cell cycle progression through cell-size checkpoint. The polypeptide is Mannose-1-phosphate guanyltransferase (MPG1) (Kluyveromyces lactis (strain ATCC 8585 / CBS 2359 / DSM 70799 / NBRC 1267 / NRRL Y-1140 / WM37) (Yeast)).